The chain runs to 419 residues: uncharacterized protein (419 aa).

12 consecutive transmembrane segments (helical) span residues 15 to 35, 36 to 56, 77 to 99, 104 to 126, 140 to 160, 166 to 186, 213 to 233, 246 to 266, 282 to 302, 309 to 329, 351 to 371, and 377 to 397; these read RVLM…MPYL, ADYL…VMGV, YKPL…VVAQ, VLIA…RGYL, MFNV…LVLL, ITVL…LVAL, FLTL…IYLA, QYLL…GGQL, LVVG…IPNG, VAVM…AALF, FYST…GSLM, and LNTD…AVAG.

Belongs to the major facilitator superfamily.

It localises to the cell membrane. This is an uncharacterized protein from Mycobacterium tuberculosis (strain CDC 1551 / Oshkosh).